The primary structure comprises 349 residues: Ion-translocating oxidoreductase complex subunit D (349 aa).

The next 3 helical transmembrane spans lie at 20-42 (VMQR…FGWG), 77-99 (SAML…WMIV), and 124-144 (AMAA…TWIA). Thr-185 is modified (FMN phosphoryl threonine). 5 consecutive transmembrane segments (helical) span residues 212–232 (STGV…LVLL), 239–259 (WHIS…GFLL), 265–285 (ASPL…FIAT), 291–311 (ATSS…VYII), and 315–335 (GGYP…APFI).

Belongs to the NqrB/RnfD family. As to quaternary structure, the complex is composed of six subunits: RnfA, RnfB, RnfC, RnfD, RnfE and RnfG. FMN serves as cofactor.

The protein localises to the cell inner membrane. In terms of biological role, part of a membrane-bound complex that couples electron transfer with translocation of ions across the membrane. The protein is Ion-translocating oxidoreductase complex subunit D of Shewanella baltica (strain OS223).